The primary structure comprises 264 residues: AA9 family lytic polysaccharide monooxygenase A (264 aa).

An N-terminal signal peptide occupies residues 1 to 18 (MHFAALAILSSLVASAAA). Histidine 19 is a Cu(2+) binding site. N-linked (GlcNAc...) asparagine glycosylation is found at asparagine 51 and asparagine 75. The cysteines at positions 59 and 182 are disulfide-linked. Histidine 96 lines the Cu(2+) pocket. The N-linked (GlcNAc...) asparagine glycan is linked to asparagine 110. Histidine 162 contacts O2. Residue tyrosine 179 participates in Cu(2+) binding. N-linked (GlcNAc...) asparagine glycans are attached at residues asparagine 218 and asparagine 251.

This sequence belongs to the polysaccharide monooxygenase AA9 family. Cu(2+) serves as cofactor.

It is found in the secreted. It catalyses the reaction [(1-&gt;4)-beta-D-glucosyl]n+m + reduced acceptor + O2 = 4-dehydro-beta-D-glucosyl-[(1-&gt;4)-beta-D-glucosyl]n-1 + [(1-&gt;4)-beta-D-glucosyl]m + acceptor + H2O.. Functionally, lytic polysaccharide monooxygenase (LPMO) that depolymerizes crystalline and amorphous polysaccharides via the oxidation of scissile alpha- or beta-(1-4)-glycosidic bonds, yielding C4 oxidation products. Catalysis by LPMOs requires the reduction of the active-site copper from Cu(II) to Cu(I) by a reducing agent and H(2)O(2) or O(2) as a cosubstrate. Active on cellulose and cello-oligosaccharides, as well as plant cell wall-derived hemicellulosic polysaccharides. Also active on cello-oligosaccharides such as cellohexaose, cellopentaose or cellotetraose. The chain is AA9 family lytic polysaccharide monooxygenase A from Phanerochaete carnosa (strain HHB-10118-sp) (White-rot fungus).